Consider the following 257-residue polypeptide: Undecaprenyl-diphosphatase (257 aa).

Helical transmembrane passes span 42–62, 76–96, 103–123, 136–156, 172–192, 209–229, and 237–257; these read YVLF…YMFL, IFHI…LKPI, PQYL…GVYF, CLTI…RSGA, IQFS…LEIW, QFLT…WAVI, and WVYF…YFQM.

Belongs to the UppP family.

The protein localises to the cell inner membrane. The catalysed reaction is di-trans,octa-cis-undecaprenyl diphosphate + H2O = di-trans,octa-cis-undecaprenyl phosphate + phosphate + H(+). Its function is as follows. Catalyzes the dephosphorylation of undecaprenyl diphosphate (UPP). Confers resistance to bacitracin. This Protochlamydia amoebophila (strain UWE25) protein is Undecaprenyl-diphosphatase.